The sequence spans 162 residues: Corticoliberin (162 aa).

Residues 1–24 (MKLNFLVTTVALLVAFPPPYECRA) form the signal peptide. The propeptide occupies 25 to 119 (IEGSSNQPAT…ALDSVERERR (95 aa)). A Phenylalanine amide modification is found at phenylalanine 160.

The protein belongs to the sauvagine/corticotropin-releasing factor/urotensin I family.

The protein resides in the secreted. In terms of biological role, this hormone from hypothalamus regulates the release of corticotropin from pituitary gland. This chain is Corticoliberin (crh), found in Carassius auratus (Goldfish).